The following is a 162-amino-acid chain: Ubiquitin-fold modifier-conjugating enzyme 1 (162 aa).

The active-site Glycyl thioester intermediate is the cysteine 115.

It belongs to the ubiquitin-conjugating enzyme family. UFC1 subfamily. Interacts with uba-5.

Functionally, E2-like enzyme which forms an intermediate with ufm-1. The intermediate is formed via a thioester linkage. In Caenorhabditis briggsae, this protein is Ubiquitin-fold modifier-conjugating enzyme 1.